We begin with the raw amino-acid sequence, 152 residues long: MTIWVDADACPNVIKEILYRAAERMQMPLVLVANQSLRVPPSRFIRTLRVAAGFDVADNEIVRQCEAGDLVITADIPLAAEAIEKGAAALNPRGERYTPATIRERLTMRDFMDTLRASGIQTGGPDSLSQRDRQAFAAELEKWWLKVQRSRG.

The protein belongs to the UPF0178 family.

The protein is UPF0178 protein YaiI of Escherichia coli O81 (strain ED1a).